The primary structure comprises 650 residues: Aminopeptidase B (650 aa).

G298 to N302 is a binding site for substrate. H325 lines the Zn(2+) pocket. Residue E326 is the Proton acceptor of the active site. Zn(2+) contacts are provided by H329 and E348. The residue at position 446 (K446) is an N6-acetyllysine.

It belongs to the peptidase M1 family. In terms of assembly, monomer. Zn(2+) serves as cofactor.

It localises to the secreted. It carries out the reaction Release of N-terminal Arg and Lys from oligopeptides when P1' is not Pro. Also acts on arylamides of Arg and Lys.. In terms of biological role, exopeptidase which selectively removes arginine and/or lysine residues from the N-terminus of several peptide substrates including Arg(0)-Leu-enkephalin, Arg(0)-Met-enkephalin and Arg(-1)-Lys(0)-somatostatin-14. Can hydrolyze leukotriene A4 (LTA-4) into leukotriene B4 (LTB-4). The sequence is that of Aminopeptidase B (Rnpep) from Mus musculus (Mouse).